Reading from the N-terminus, the 208-residue chain is Non-specific lipid transfer protein GPI-anchored 4 (208 aa).

A signal peptide spans 1–25; that stretch reads MKQSLLLSFVLLLLSSSSLVTPIHA. N-linked (GlcNAc...) asparagine glycosylation is found at N27, N67, and N105. 4 disulfide bridges follow: C48/C91, C58/C75, C76/C116, and C89/C125. Residues 136 to 181 are disordered; sequence GASPVSPSAGAPTTSPSAAKSPETSATSPSSDETPSMTAPSPSSSG. The GPI-anchor amidated serine moiety is linked to residue S179. Residues 180–208 constitute a propeptide, removed in mature form; that stretch reads SGTNILSVPALTIVFVIVSSVAYISAFSN.

This sequence belongs to the plant LTP family. In terms of tissue distribution, confined to the anthers and stamen of the inflorescence, especially in pollen.

The protein resides in the cell membrane. In terms of biological role, lipid transfer protein involved in seed and ovule maturation and development, probably by regulating the fatty acids homeostasis during suberin and sporopollenin biosynthesis or deposition. In Arabidopsis thaliana (Mouse-ear cress), this protein is Non-specific lipid transfer protein GPI-anchored 4.